Consider the following 511-residue polypeptide: Maturase K (511 aa).

The protein belongs to the intron maturase 2 family. MatK subfamily.

The protein resides in the plastid. The protein localises to the chloroplast. Functionally, usually encoded in the trnK tRNA gene intron. Probably assists in splicing its own and other chloroplast group II introns. In Bowiea volubilis (Climbing onion), this protein is Maturase K.